The following is a 323-amino-acid chain: tRNA U34 carboxymethyltransferase (323 aa).

Carboxy-S-adenosyl-L-methionine is bound by residues Lys-91, Trp-105, Lys-110, Gly-130, 152–154 (DPS), 181–182 (IE), Met-196, Tyr-200, and Arg-315.

This sequence belongs to the class I-like SAM-binding methyltransferase superfamily. CmoB family. As to quaternary structure, homotetramer.

The enzyme catalyses carboxy-S-adenosyl-L-methionine + 5-hydroxyuridine(34) in tRNA = 5-carboxymethoxyuridine(34) in tRNA + S-adenosyl-L-homocysteine + H(+). Functionally, catalyzes carboxymethyl transfer from carboxy-S-adenosyl-L-methionine (Cx-SAM) to 5-hydroxyuridine (ho5U) to form 5-carboxymethoxyuridine (cmo5U) at position 34 in tRNAs. This Vibrio campbellii (strain ATCC BAA-1116) protein is tRNA U34 carboxymethyltransferase.